A 319-amino-acid polypeptide reads, in one-letter code: Ubiquinone biosynthesis protein COQ9, mitochondrial (319 aa).

The transit peptide at 1–45 (MAATVAFSGVLRRAGWRLLQLRCLPVPRCRPALAPRAFRASAMQL) directs the protein to the mitochondrion. The short motif at 17–32 (RLLQLRCLPVPRCRPA) is the SIFI-degron element. Residues 46-99 (RSLDQQKDQPPPSSSQQQSEAQGAEEPNPEALRSPPRYTDQGGEEEEDYESEEQ) are disordered. Residues 87–98 (GGEEEEDYESEE) are compositionally biased toward acidic residues. K176 carries the N6-acetyllysine modification. R245 provides a ligand contact to a 1,2-diacylglycero-3-phosphoethanolamine.

Belongs to the COQ9 family. In terms of assembly, homodimer. Heterodimer; two heterodimers of COQ7:COQ9 come together on the same side of the lipid pseudo-bilayer and form a curved tetramer with a hydrophobic surface suitable for membrane interaction. These two tetramers assemble into a soluble octamer with a pseudo-bilayer of lipids captured within. Interacts with COQ7; this interaction allows ubiquinone (CoQ) isoprene intermediates presentation to COQ7 and facilitates the COQ7-mediated hydroxylase step. Post-translationally, in response to mitochondrial stress, the precursor protein is ubiquitinated by the SIFI complex in the cytoplasm before mitochondrial import, leading to its degradation. Within the SIFI complex, UBR4 initiates ubiquitin chain that are further elongated or branched by KCMF1.

The protein resides in the mitochondrion. It participates in cofactor biosynthesis; ubiquinone biosynthesis. Its function is as follows. Membrane-associated protein that warps the membrane surface to access and bind aromatic isoprenes with high specificity, including ubiquinone (CoQ) isoprene intermediates and presents them directly to COQ7, therefore facilitating the COQ7-mediated hydroxylase step. Participates in the biosynthesis of coenzyme Q, also named ubiquinone, an essential lipid-soluble electron transporter for aerobic cellular respiration. This chain is Ubiquinone biosynthesis protein COQ9, mitochondrial, found in Bos taurus (Bovine).